Reading from the N-terminus, the 220-residue chain is 1-Cys peroxiredoxin B (220 aa).

One can recognise a Thioredoxin domain in the interval 4–165 (LTLGDVVPDL…VLRATDALLT (162 aa)). Cysteine 46 (cysteine sulfenic acid (-SOH) intermediate) is an active-site residue. Positions 195–218 (KARFPAGFETAQLPSNKCYLRFTQ) match the Bipartite nuclear localization signal motif.

The protein belongs to the peroxiredoxin family. Prx6 subfamily.

The protein localises to the nucleus. It is found in the cytoplasm. The enzyme catalyses a hydroperoxide + [thioredoxin]-dithiol = an alcohol + [thioredoxin]-disulfide + H2O. Its function is as follows. Thiol-specific peroxidase that catalyzes the reduction of hydrogen peroxide and organic hydroperoxides to water and alcohols, respectively. Seems to contribute to the inhibition of germination during stress. In Oryza sativa subsp. japonica (Rice), this protein is 1-Cys peroxiredoxin B.